The following is a 1006-amino-acid chain: Probable beta-galactosidase A (1006 aa).

An N-terminal signal peptide occupies residues Met1 to Gly18. The substrate site is built by Tyr96, Asn140, Ala141, and Glu142. Asn156 carries an N-linked (GlcNAc...) asparagine glycan. Substrate is bound at residue Asn199. Residue Glu200 is the Proton donor of the active site. A disulfide bridge connects residues Cys205 and Cys206. Tyr260 contacts substrate. A disulfide bridge connects residues Cys266 and Cys315. Glu298 functions as the Nucleophile in the catalytic mechanism. Tyr364 provides a ligand contact to substrate. 7 N-linked (GlcNAc...) asparagine glycosylation sites follow: Asn373, Asn402, Asn422, Asn622, Asn760, Asn777, and Asn914.

This sequence belongs to the glycosyl hydrolase 35 family.

The protein localises to the secreted. It carries out the reaction Hydrolysis of terminal non-reducing beta-D-galactose residues in beta-D-galactosides.. Functionally, cleaves beta-linked terminal galactosyl residues from gangliosides, glycoproteins, and glycosaminoglycans. The chain is Probable beta-galactosidase A (lacA) from Aspergillus fumigatus (strain ATCC MYA-4609 / CBS 101355 / FGSC A1100 / Af293) (Neosartorya fumigata).